A 436-amino-acid polypeptide reads, in one-letter code: 3-ketoacyl-CoA thiolase (436 aa).

C99 serves as the catalytic Acyl-thioester intermediate. Catalysis depends on proton acceptor residues H392 and C422.

Belongs to the thiolase-like superfamily. Thiolase family. Heterotetramer of two alpha chains (FadJ) and two beta chains (FadI).

It localises to the cytoplasm. It carries out the reaction an acyl-CoA + acetyl-CoA = a 3-oxoacyl-CoA + CoA. It functions in the pathway lipid metabolism; fatty acid beta-oxidation. Functionally, catalyzes the final step of fatty acid oxidation in which acetyl-CoA is released and the CoA ester of a fatty acid two carbons shorter is formed. This Salmonella newport (strain SL254) protein is 3-ketoacyl-CoA thiolase.